The following is a 346-amino-acid chain: D-alanine--D-alanine ligase (346 aa).

The ATP-grasp domain maps to 133–327 (KLYAKSVGVK…TLADQIPLEK (195 aa)). Position 159–211 (159–211 (LRFPCIIKPARLGSSIGISIVKDEKDLEYAKDVGFEFDNDLVVEEFKNNIKEY)) interacts with ATP. Residues Asp-284, Glu-296, and Asn-298 each contribute to the Mg(2+) site.

It belongs to the D-alanine--D-alanine ligase family. Mg(2+) serves as cofactor. It depends on Mn(2+) as a cofactor.

The protein localises to the cytoplasm. The catalysed reaction is 2 D-alanine + ATP = D-alanyl-D-alanine + ADP + phosphate + H(+). It participates in cell wall biogenesis; peptidoglycan biosynthesis. In terms of biological role, cell wall formation. In Campylobacter jejuni subsp. doylei (strain ATCC BAA-1458 / RM4099 / 269.97), this protein is D-alanine--D-alanine ligase.